A 378-amino-acid chain; its full sequence is Erythronate-4-phosphate dehydrogenase (378 aa).

Substrate is bound by residues S45 and T66. The NAD(+) site is built by D146 and T175. The active site involves R208. Residue D232 participates in NAD(+) binding. Residue E237 is part of the active site. Catalysis depends on H254, which acts as the Proton donor. G257 is a binding site for NAD(+). Y258 contacts substrate.

The protein belongs to the D-isomer specific 2-hydroxyacid dehydrogenase family. PdxB subfamily. In terms of assembly, homodimer.

Its subcellular location is the cytoplasm. The enzyme catalyses 4-phospho-D-erythronate + NAD(+) = (R)-3-hydroxy-2-oxo-4-phosphooxybutanoate + NADH + H(+). It participates in cofactor biosynthesis; pyridoxine 5'-phosphate biosynthesis; pyridoxine 5'-phosphate from D-erythrose 4-phosphate: step 2/5. Functionally, catalyzes the oxidation of erythronate-4-phosphate to 3-hydroxy-2-oxo-4-phosphonooxybutanoate. The chain is Erythronate-4-phosphate dehydrogenase from Escherichia coli O81 (strain ED1a).